The chain runs to 176 residues: MDPPDSASRVFSSRILSMVNADDVSAIILAQKNMLDRFEKTNEMLLNFNNLSSARLQQMNERFLHHTRTLVEMKRDLDSIFRRIRTLKGKLARQHPEAFSHIPEASLLEDEDEDPIPPSTTTTIATSEQSTGSCDTSPDTVSPSLSPGFEDLSHIRPGSPAINGRSHTDDEEMPGE.

N-acetylmethionine is present on Met1. A disordered region spans residues 95–176 (HPEAFSHIPE…HTDDEEMPGE (82 aa)). Residues 119 to 131 (STTTTIATSEQST) show a composition bias toward low complexity. Residues 132-145 (GSCDTSPDTVSPSL) are compositionally biased toward polar residues.

It belongs to the KXD1 family. In terms of assembly, component of the BLOC-one-related complex (BORC) which is composed of BLOC1S1, BLOC1S2, BORCS5, BORCS6, BORCS7, BORCS8, KXD1 and SNAPIN. Associates with the BLOC-1 complex. Interacts with BLOC1S1. Interacts with DTNBP1/BLOC1S7 (via coiled-coil domain).

The protein resides in the lysosome membrane. Functionally, as part of the BORC complex may play a role in lysosomes movement and localization at the cell periphery. Associated with the cytosolic face of lysosomes, the BORC complex may recruit ARL8B and couple lysosomes to microtubule plus-end-directed kinesin motor. May also be involved in the biogenesis of lysosome-related organelles such as melanosomes. The sequence is that of KxDL motif-containing protein 1 (KXD1) from Bos taurus (Bovine).